The following is a 360-amino-acid chain: MLMLLVALADEFSVLNVFRYITFRTGGALITAAFIVFLFGPAIISSLRLRQGKGQPIRADGPQTHFKKAGTPTMGGLMIFSGILGSSILWGNLSSVYVWVVLMVMVGFGAIGFYDDYLKVTKQSHLGFSGKSRLALEFVIAGFAAWIIMSAGQEPFSSSLTFPFFKELLLNLGIFFIPFAAFVIVGAGNAVNLTDGLDGLATVPVMVAAASFGVIAYLSGNAIFADYLQIHFVPGTGELSVILGAVIGAGLGFLWFNAPPAAIFMGDTGSLALGGLIGTVAVATKHEIVLAIIGGLFVIEILSVIIQVAVFKMTGKRVFLMAPIHHHFEKLGWTESQVVIRFWIIAVVLALIGLSTLKLR.

The next 10 helical transmembrane spans lie at 27 to 47 (GALI…ISSL), 70 to 90 (GTPT…SILW), 93 to 113 (LSSV…AIGF), 134 to 154 (LALE…AGQE), 168 to 188 (LLLN…VGAG), 205 to 225 (VMVA…AIFA), 239 to 259 (LSVI…FNAP), 262 to 282 (AIFM…TVAV), 288 to 308 (IVLA…IIQV), and 337 to 357 (QVVI…LSTL).

Belongs to the glycosyltransferase 4 family. MraY subfamily. The cofactor is Mg(2+).

The protein localises to the cell inner membrane. It carries out the reaction UDP-N-acetyl-alpha-D-muramoyl-L-alanyl-gamma-D-glutamyl-meso-2,6-diaminopimeloyl-D-alanyl-D-alanine + di-trans,octa-cis-undecaprenyl phosphate = di-trans,octa-cis-undecaprenyl diphospho-N-acetyl-alpha-D-muramoyl-L-alanyl-D-glutamyl-meso-2,6-diaminopimeloyl-D-alanyl-D-alanine + UMP. The protein operates within cell wall biogenesis; peptidoglycan biosynthesis. Functionally, catalyzes the initial step of the lipid cycle reactions in the biosynthesis of the cell wall peptidoglycan: transfers peptidoglycan precursor phospho-MurNAc-pentapeptide from UDP-MurNAc-pentapeptide onto the lipid carrier undecaprenyl phosphate, yielding undecaprenyl-pyrophosphoryl-MurNAc-pentapeptide, known as lipid I. This Chelativorans sp. (strain BNC1) protein is Phospho-N-acetylmuramoyl-pentapeptide-transferase.